Reading from the N-terminus, the 117-residue chain is Large ribosomal subunit protein bL19 (117 aa).

Belongs to the bacterial ribosomal protein bL19 family.

Functionally, this protein is located at the 30S-50S ribosomal subunit interface and may play a role in the structure and function of the aminoacyl-tRNA binding site. The chain is Large ribosomal subunit protein bL19 from Vibrio parahaemolyticus serotype O3:K6 (strain RIMD 2210633).